A 149-amino-acid polypeptide reads, in one-letter code: Calmodulin (149 aa).

N-acetylalanine is present on Ala-2. EF-hand domains follow at residues 8 to 43 (EQIAEFKEAFSLFDKDGDGCITTKELGTVMRSLGQN), 44 to 79 (PTEAELQDMINEVDADGNGTIDFPELLNLMARKMKD), 81 to 116 (DSEEELKEAFRVFDKDQNGFISAAELRHVMTNLGEK), and 117 to 149 (LTDEEVDEMIREADVDGDGQINYEEFVKVMMAK). Residues Asp-21, Asp-23, Asp-25, Cys-27, Glu-32, Asp-57, Asp-59, Asn-61, Thr-63, Glu-68, Asp-94, Asp-96, Asn-98, and Glu-105 each contribute to the Ca(2+) site. Position 116 is an N6,N6,N6-trimethyllysine (Lys-116). Asp-130, Asp-132, Asp-134, Gln-136, and Glu-141 together coordinate Ca(2+).

The protein belongs to the calmodulin family.

Calmodulin mediates the control of a large number of enzymes, ion channels and other proteins by Ca(2+). Among the enzymes to be stimulated by the calmodulin-Ca(2+) complex are a number of protein kinases and phosphatases. This chain is Calmodulin (CALM1), found in Zea mays (Maize).